The following is a 231-amino-acid chain: Protein fmp52-2, mitochondrial (231 aa).

A mitochondrion-targeting transit peptide spans 1 to 46 (MTMTTAAVFGCTGAVGSQILATLLAIDTFPSVKTISRRLPNVQSPK).

This sequence belongs to the FMP52 family.

It is found in the mitochondrion outer membrane. This chain is Protein fmp52-2, mitochondrial (fmp522), found in Neosartorya fischeri (strain ATCC 1020 / DSM 3700 / CBS 544.65 / FGSC A1164 / JCM 1740 / NRRL 181 / WB 181) (Aspergillus fischerianus).